Consider the following 690-residue polypeptide: Glycine--tRNA ligase beta subunit (690 aa).

The protein belongs to the class-II aminoacyl-tRNA synthetase family. As to quaternary structure, tetramer of two alpha and two beta subunits.

The protein resides in the cytoplasm. The enzyme catalyses tRNA(Gly) + glycine + ATP = glycyl-tRNA(Gly) + AMP + diphosphate. This Buchnera aphidicola subsp. Acyrthosiphon pisum (strain Tuc7) protein is Glycine--tRNA ligase beta subunit.